The chain runs to 391 residues: Putative F-box protein At1g47730 (391 aa).

A compositionally biased stretch (basic and acidic residues) spans 1–12 (MEQREEKTENIQ). Residues 1 to 25 (MEQREEKTENIQRKRSRGKSSSSSL) form a disordered region. Residues 19 to 68 (KSSSSSLPLDLTSEIFSRLPAKSVVRFRCVSKLWSSITTAPYFTNSFETR) form the F-box domain.

The chain is Putative F-box protein At1g47730 from Arabidopsis thaliana (Mouse-ear cress).